A 351-amino-acid polypeptide reads, in one-letter code: Histidinol-phosphate aminotransferase (351 aa).

The residue at position 214 (lysine 214) is an N6-(pyridoxal phosphate)lysine.

Belongs to the class-II pyridoxal-phosphate-dependent aminotransferase family. Histidinol-phosphate aminotransferase subfamily. Requires pyridoxal 5'-phosphate as cofactor.

The enzyme catalyses L-histidinol phosphate + 2-oxoglutarate = 3-(imidazol-4-yl)-2-oxopropyl phosphate + L-glutamate. It participates in amino-acid biosynthesis; L-histidine biosynthesis; L-histidine from 5-phospho-alpha-D-ribose 1-diphosphate: step 7/9. This chain is Histidinol-phosphate aminotransferase, found in Methanosphaerula palustris (strain ATCC BAA-1556 / DSM 19958 / E1-9c).